Consider the following 154-residue polypeptide: Snaclec agglucetin subunit alpha-1 (154 aa).

The N-terminal stretch at 1 to 23 is a signal peptide; it reads MGRFIFVSFGLLVVFLSLSGTGA. 3 cysteine pairs are disulfide-bonded: C27–C38, C55–C150, and C125–C142. The region spanning 34–151 is the C-type lectin domain; sequence YDQSCYRVFK…CGSEYAFVCK (118 aa). An N-linked (GlcNAc...) asparagine glycan is attached at N116.

Belongs to the snaclec family. Heterotetramer of the subunits alpha-1, alpha-2, beta-1 and beta-2; disulfide-linked. As to expression, expressed by the venom gland.

The protein localises to the secreted. Agglucetin specifically causes platelet aggregation and surface exposure of integrin alpha-IIb/beta-3 with a GPIb-(GP1BA-) dependent manner in washed platelets. It binds to human platelets in a saturable manner, and its binding is specifically blocked by anti-GP Ib mAb. It regulates endothelial cell survival and promotes angiogenesis by activating integrin alpha-v/beta-3 signaling through FAK/phosphatidylinositol 3-kinase (PI3K)/Akt pathway. This is Snaclec agglucetin subunit alpha-1 from Deinagkistrodon acutus (Hundred-pace snake).